Consider the following 96-residue polypeptide: Large ribosomal subunit protein eL21 (96 aa).

This sequence belongs to the eukaryotic ribosomal protein eL21 family.

This Methanoregula boonei (strain DSM 21154 / JCM 14090 / 6A8) protein is Large ribosomal subunit protein eL21.